Here is a 572-residue protein sequence, read N- to C-terminus: MAKELKGIAASDGIAIAKAYLLVEPDLSYEKTEVTDVESEVKRFESALEVSRTELSMIREKAAKDLGEDKAQIFDAHLLVLNDPELTGPIEESIKNSKTNAETALQETTDMFIGMFESMDNEYMRERAADIKDVRKRVLSHLLGVTIPNPALIDEEVVVVAADLTPSDTAQLNRNFVKGFVTDIGGRTSHSAIMARSLEIPAVVGTKEVTASVAKNDIVIIDGLEGNVIIHPTEEQIAHYEKIKSDFALQQAEWDKLKNEKTVSKDGVHVELAANIGTPNDLEGVISNGGEAVGLYRTEFLYMGRDNFPTEEEQFEAYKAVVSGMDGKSVVVRTLDIGGDKTLPYLELPEEMNPFLGFRAIRLCFANEELFRTQLRALLRASVYGNLKIMFPMIATVNEFRQARDILLDEKAKLKAAGTEVSDSIELGIMIEIPAAAVLADQFAKEVDFFSIGTNDLIQYTMAADRMNERVSYLYQPYNPSILRLVKMVIDASHKEGKWTGMCGEMAGDQTAVPLLLGLGLDEFSMSASSILKSRSLIKRLDQSEMVKLAEEALNKSTAEEVVELVEKYTAE.

Catalysis depends on His190, which acts as the Tele-phosphohistidine intermediate. Residues Arg297 and Arg333 each coordinate phosphoenolpyruvate. Glu432 and Asp456 together coordinate Mg(2+). Phosphoenolpyruvate contacts are provided by residues 455 to 456 (ND) and Arg466. Catalysis depends on Cys503, which acts as the Proton donor.

This sequence belongs to the PEP-utilizing enzyme family. In terms of assembly, homodimer. Requires Mg(2+) as cofactor.

The protein localises to the cytoplasm. The catalysed reaction is L-histidyl-[protein] + phosphoenolpyruvate = N(pros)-phospho-L-histidyl-[protein] + pyruvate. Its function is as follows. General (non sugar-specific) component of the phosphoenolpyruvate-dependent sugar phosphotransferase system (sugar PTS). This major carbohydrate active-transport system catalyzes the phosphorylation of incoming sugar substrates concomitantly with their translocation across the cell membrane. Enzyme I transfers the phosphoryl group from phosphoenolpyruvate (PEP) to the phosphoryl carrier protein (HPr). This chain is Phosphoenolpyruvate-protein phosphotransferase (ptsI), found in Listeria monocytogenes serovar 1/2a (strain ATCC BAA-679 / EGD-e).